We begin with the raw amino-acid sequence, 560 residues long: uncharacterized protein (560 aa).

Helical transmembrane passes span 9 to 29, 61 to 81, 136 to 156, 305 to 325, and 442 to 462; these read LVITILLIVLGANWLLSSFLL, ILVPTGFPLTTGLGLSLKYKI, IGIANSIATVEGFTLSLASMM, SLQIWGKLFAVLLHGGSASFI, and VVLELYCPYAIMGPVAHTNFY.

The protein localises to the membrane. This is an uncharacterized protein from Saccharomyces cerevisiae (strain ATCC 204508 / S288c) (Baker's yeast).